The chain runs to 197 residues: RNA pyrophosphohydrolase (197 aa).

The region spanning 6–150 (GYRPNVGIVI…KRDVYRKVMR (145 aa)) is the Nudix hydrolase domain. Positions 38-59 (GGINEGENIETAMYRELYEEVG) match the Nudix box motif.

The protein belongs to the Nudix hydrolase family. RppH subfamily. A divalent metal cation serves as cofactor.

Its function is as follows. Accelerates the degradation of transcripts by removing pyrophosphate from the 5'-end of triphosphorylated RNA, leading to a more labile monophosphorylated state that can stimulate subsequent ribonuclease cleavage. In Haemophilus ducreyi (strain 35000HP / ATCC 700724), this protein is RNA pyrophosphohydrolase.